Reading from the N-terminus, the 943-residue chain is MTDYKATLNLPETAFPMKAGLPQREPETLKFWNDIGLYQKLRAIGGDRPKFVLHDGPPYANGSIHIGHAVNKILKDIIVRSKTLAGYDAPYVPGWDCHGLPIEHKVETTHGKNLPADKTRELCREYAAEQIEGQKADFIRLGVLGEWDNPYKTMNFANEANEIRALAEMVKQDFVFKGLKPVNWCFDCGSALAEAEVEYADKKSPTIDVGFPVADADKLAAAFGLAALDKPAQIVIWTTTPWTIPANQALNVHPEIDYALVDAGDRYLVLAEALVESCLARYQREGKVVATAKGEALELINFRHPFYERLSPVYLADYVALDAGTGIVHSSPAYGEDDFYTCKRYGMSNDDILSPVQSNGVYVDSLPFFGGQFIWKANPNVVAKLEEVGSLLAHETINHSYMHCWRHKTPLIYRATAQWFVGMDKQPRQGASLRERALEAITQTEFVPGWGQARLHGMIAGRPDWCISRQRNWGVPIPFFLHKASGELHPRTVELMEEVAQRVEKEGIEAWFKLDAAELLGEEAAQYEKINDTLDVWFDSGTTHWHVLRGSHRIGHASGPVADLYLEGSDQHRGWFHSSLLTGCAIDNHAPYRQLLTHGFTVDESGRKMSKSLGNTVVPQTVIDTLGADILRLWVASTDYSGEIAVSQQILQRSADAYRRIRNTTRFLLSNLNGFDPATDLLPPQEMLALDRWAVDRALLLQREIEEAYREYRFWNVYSKVHNFCVQELGGFYLDIIKDRQYTTGANSVARRSCQTALFHIAEALVRWIAPILAFTAEEVWKFLPGERAESVMLATWYDGLNELPADVTLNRQYWEQVMAVKAAVNKELENQRAAKAVGGNLQAEVTLYAEDALQAQLAKLGNELRFVLITSTATLAPLSAAPADAVDSEVAGLKLKVVKSTHAKCGRCWHHREDVGQHAAHPDLCGRCIENIEGSGEVRHYA.

Residues P58–H68 carry the 'HIGH' region motif. E567 contributes to the L-isoleucyl-5'-AMP binding site. Positions K608–S612 match the 'KMSKS' region motif. K611 serves as a coordination point for ATP. Residues C906, C909, C926, and C929 each contribute to the Zn(2+) site.

This sequence belongs to the class-I aminoacyl-tRNA synthetase family. IleS type 1 subfamily. As to quaternary structure, monomer. Zn(2+) is required as a cofactor.

The protein resides in the cytoplasm. It catalyses the reaction tRNA(Ile) + L-isoleucine + ATP = L-isoleucyl-tRNA(Ile) + AMP + diphosphate. Catalyzes the attachment of isoleucine to tRNA(Ile). As IleRS can inadvertently accommodate and process structurally similar amino acids such as valine, to avoid such errors it has two additional distinct tRNA(Ile)-dependent editing activities. One activity is designated as 'pretransfer' editing and involves the hydrolysis of activated Val-AMP. The other activity is designated 'posttransfer' editing and involves deacylation of mischarged Val-tRNA(Ile). The protein is Isoleucine--tRNA ligase of Pseudomonas aeruginosa (strain ATCC 15692 / DSM 22644 / CIP 104116 / JCM 14847 / LMG 12228 / 1C / PRS 101 / PAO1).